The following is a 156-amino-acid chain: Ribosomal RNA large subunit methyltransferase H (156 aa).

S-adenosyl-L-methionine is bound by residues L73, G104, and 123 to 128; that span reads ISSLTL.

The protein belongs to the RNA methyltransferase RlmH family. Homodimer.

Its subcellular location is the cytoplasm. The catalysed reaction is pseudouridine(1915) in 23S rRNA + S-adenosyl-L-methionine = N(3)-methylpseudouridine(1915) in 23S rRNA + S-adenosyl-L-homocysteine + H(+). Functionally, specifically methylates the pseudouridine at position 1915 (m3Psi1915) in 23S rRNA. The chain is Ribosomal RNA large subunit methyltransferase H from Herminiimonas arsenicoxydans.